A 614-amino-acid chain; its full sequence is RNA polymerase sigma factor RpoD (614 aa).

The interval 178-222 (THIGSDLSQSERDKDDSKDDSKDDDEDEEEEGPKGPDPEESKERF) is disordered. A compositionally biased stretch (basic and acidic residues) spans 186 to 198 (QSERDKDDSKDDS). Residues 199–208 (KDDDEDEEEE) are compositionally biased toward acidic residues. A compositionally biased stretch (basic and acidic residues) spans 209–222 (GPKGPDPEESKERF). A sigma-70 factor domain-2 region spans residues 380-450 (MVEANLRLVI…TRSIADQART (71 aa)). Residues 404 to 407 (DLIQ) carry the Interaction with polymerase core subunit RpoC motif. The interval 459-535 (ETINKLNRIS…DTTLELPLDS (77 aa)) is sigma-70 factor domain-3. A sigma-70 factor domain-4 region spans residues 548–601 (VLAGLTAREAKVLRMRFGIDMNTDHTLEEVGKQFDVTRERIRQIEAKALRKLRH). A DNA-binding region (H-T-H motif) is located at residues 574–593 (LEEVGKQFDVTRERIRQIEA).

The protein belongs to the sigma-70 factor family. RpoD/SigA subfamily. Interacts transiently with the RNA polymerase catalytic core.

The protein localises to the cytoplasm. In terms of biological role, sigma factors are initiation factors that promote the attachment of RNA polymerase to specific initiation sites and are then released. This sigma factor is the primary sigma factor during exponential growth. In Shewanella violacea (strain JCM 10179 / CIP 106290 / LMG 19151 / DSS12), this protein is RNA polymerase sigma factor RpoD.